A 360-amino-acid chain; its full sequence is Mannan endo-1,4-beta-mannosidase (360 aa).

A signal peptide spans 1–24 (MLKKLAVCLSIVLLLLGAASPISA). The GH26 domain occupies 36 to 347 (QTTKDIMNWL…YQNSWTLNKG (312 aa)). Position 129 (His-129) interacts with substrate. Glu-191 (proton donor) is an active-site residue. Positions 196 and 266 each coordinate substrate. Glu-290 functions as the Nucleophile in the catalytic mechanism.

Belongs to the glycosyl hydrolase 26 family. As to quaternary structure, homodimer.

The protein resides in the secreted. The enzyme catalyses Random hydrolysis of (1-&gt;4)-beta-D-mannosidic linkages in mannans, galactomannans and glucomannans.. Involved in the degradation of glucomannan. Catalyzes the endo hydrolysis of beta-1,4-linked mannan, galactomannan and glucomannan. This chain is Mannan endo-1,4-beta-mannosidase, found in Bacillus subtilis.